The following is a 118-amino-acid chain: MYVEVLKSKIHRVTITEANLNYVGSITIDEDLMDAANIIAGEKVQIVDNNNGARLETYTIPGKRGSGVICLNGAAARIVHPGDIIIIMAYAWMPMEEAKVFKPAVVFPDTATNKIILK.

The active-site Schiff-base intermediate with substrate; via pyruvic acid is serine 25. At serine 25 the chain carries Pyruvic acid (Ser). A substrate-binding site is contributed by threonine 57. Residue tyrosine 58 is the Proton donor of the active site. Glycine 73–alanine 75 lines the substrate pocket.

Belongs to the PanD family. In terms of assembly, heterooctamer of four alpha and four beta subunits. Pyruvate serves as cofactor. In terms of processing, is synthesized initially as an inactive proenzyme, which is activated by self-cleavage at a specific serine bond to produce a beta-subunit with a hydroxyl group at its C-terminus and an alpha-subunit with a pyruvoyl group at its N-terminus.

Its subcellular location is the cytoplasm. The catalysed reaction is L-aspartate + H(+) = beta-alanine + CO2. The protein operates within cofactor biosynthesis; (R)-pantothenate biosynthesis; beta-alanine from L-aspartate: step 1/1. Its function is as follows. Catalyzes the pyruvoyl-dependent decarboxylation of aspartate to produce beta-alanine. This Porphyromonas gingivalis (strain ATCC 33277 / DSM 20709 / CIP 103683 / JCM 12257 / NCTC 11834 / 2561) protein is Aspartate 1-decarboxylase.